Reading from the N-terminus, the 428-residue chain is Inward rectifier potassium channel 2 (428 aa).

Over 1–81 (MGSVRTNRYS…IFTTCVDIRW (81 aa)) the chain is Cytoplasmic. Cysteine 76 is subject to S-nitrosocysteine. A helical transmembrane segment spans residues 82 to 106 (RWMLVIFCLAFVLSWLFFGCVFWLI). At 107–128 (ALLHGDLDTSKVSKACVSEVNS) the chain is on the extracellular side. The segment at residues 129-140 (FTAAFLFSIETQ) is an intramembrane region (helical; Pore-forming). Residues 141-147 (TTIGYGF) constitute an intramembrane region (pore-forming). Residues 142–147 (TIGYGF) carry the Selectivity filter motif. At 148-156 (RCVTDECPI) the chain is on the extracellular side. A helical membrane pass occupies residues 157–178 (AVFMVVFQSIVGCIIDAFIIGA). The Cytoplasmic portion of the chain corresponds to 179–428 (VMAKMAKPKK…PRPLRRESEI (250 aa)). Residues 181 to 208 (AKMAKPKKRNETLVFSHNAVIAMRDGKL) are polyphosphoinositide (PIP2)-binding. The segment at 383–428 (TSKEEEEDSENGVPESTSTDSPPGIDLHNQASVPLEPRPLRRESEI) is disordered. A PDZ-binding motif is present at residues 426 to 428 (SEI).

This sequence belongs to the inward rectifier-type potassium channel (TC 1.A.2.1) family. KCNJ2 subfamily. As to quaternary structure, homotetramer. Homomultimeric and heteromultimeric association with KCNJ4/Kir2.3. Can form heteromeric channels with Kir2.6/KCNJ18. Associates, via its PDZ-recognition domain, with a complex containing LIN7A, LIN7B, LIN7C, DLG1, CASK and APBA1. S-nitrosylation increases the open probability and inward rectifying currents. As to expression, prominently expressed in the central nervous system. Also found in other excitable tissues such as heart and skeletal muscle.

It is found in the cell membrane. The protein resides in the sarcolemma. Its subcellular location is the T-tubule. The enzyme catalyses K(+)(in) = K(+)(out). Its activity is regulated as follows. Activated by phosphatidylinositol 4,5 biphosphate (PtdIns(4,5)P2). Functionally, inward rectifier potassium channels are characterized by a greater tendency to allow potassium to flow into the cell rather than out of it. Their voltage dependence is regulated by the concentration of extracellular potassium; as external potassium is raised, the voltage range of the channel opening shifts to more positive voltages. The inward rectification is mainly due to the blockage of outward current by internal magnesium. Can be blocked by extracellular barium and cesium. Probably participates in establishing action potential waveform and excitability of neuronal and muscle tissues. The sequence is that of Inward rectifier potassium channel 2 (Kcnj2) from Mus musculus (Mouse).